The primary structure comprises 450 residues: D-inositol 3-phosphate glycosyltransferase (450 aa).

1D-myo-inositol 3-phosphate is bound at residue His21. UDP-N-acetyl-alpha-D-glucosamine contacts are provided by residues 27–28 and Gly35; that span reads QP. Residues 32-37, Lys90, Tyr123, Thr147, and Arg167 contribute to the 1D-myo-inositol 3-phosphate site; that span reads DAGGMN. The UDP-N-acetyl-alpha-D-glucosamine site is built by Arg241, Lys246, and Val307. The Mg(2+) site is built by Tyr316, Arg317, and Ala319. 2 residues coordinate UDP-N-acetyl-alpha-D-glucosamine: Glu329 and Glu337. Residue Thr343 participates in Mg(2+) binding.

The protein belongs to the glycosyltransferase group 1 family. MshA subfamily. In terms of assembly, homodimer.

The catalysed reaction is 1D-myo-inositol 3-phosphate + UDP-N-acetyl-alpha-D-glucosamine = 1D-myo-inositol 2-acetamido-2-deoxy-alpha-D-glucopyranoside 3-phosphate + UDP + H(+). Functionally, catalyzes the transfer of a N-acetyl-glucosamine moiety to 1D-myo-inositol 3-phosphate to produce 1D-myo-inositol 2-acetamido-2-deoxy-glucopyranoside 3-phosphate in the mycothiol biosynthesis pathway. The polypeptide is D-inositol 3-phosphate glycosyltransferase (Geodermatophilus obscurus (strain ATCC 25078 / DSM 43160 / JCM 3152 / CCUG 61914 / KCC A-0152 / KCTC 9177 / NBRC 13315 / NRRL B-3577 / G-20)).